Here is a 338-residue protein sequence, read N- to C-terminus: L-serine dehydratase (338 aa).

N6-(pyridoxal phosphate)lysine is present on Lys39.

It belongs to the serine/threonine dehydratase family. Requires pyridoxal 5'-phosphate as cofactor.

It localises to the cytoplasm. It catalyses the reaction L-serine = pyruvate + NH4(+). It functions in the pathway carbohydrate biosynthesis; gluconeogenesis. The polypeptide is L-serine dehydratase (SDL1) (Saccharomyces cerevisiae (Baker's yeast)).